Reading from the N-terminus, the 192-residue chain is Elongation factor P (192 aa).

K38 is modified (N6-(3,6-diaminohexanoyl)-5-hydroxylysine).

The protein belongs to the elongation factor P family. In terms of processing, may be beta-lysylated on the epsilon-amino group of Lys-38 by the combined action of EpmA and EpmB, and then hydroxylated on the C5 position of the same residue by EpmC (if this protein is present). Lysylation is critical for the stimulatory effect of EF-P on peptide-bond formation. The lysylation moiety may extend toward the peptidyltransferase center and stabilize the terminal 3-CCA end of the tRNA. Hydroxylation of the C5 position on Lys-38 may allow additional potential stabilizing hydrogen-bond interactions with the P-tRNA.

It is found in the cytoplasm. The protein operates within protein biosynthesis; polypeptide chain elongation. In terms of biological role, involved in peptide bond synthesis. Alleviates ribosome stalling that occurs when 3 or more consecutive Pro residues or the sequence PPG is present in a protein, possibly by augmenting the peptidyl transferase activity of the ribosome. Modification of Lys-38 is required for alleviation. The protein is Elongation factor P of Mannheimia succiniciproducens (strain KCTC 0769BP / MBEL55E).